We begin with the raw amino-acid sequence, 916 residues long: MFAPLLKKLFGSKNERDVKRMAKAVQAINALEPQMVALSDEQLKAKTAEFQQRYAKGETLDQLLPEAFAVVREAGKRVMGMRHFDVQLIGGMTLHDGKIAEMRTGEGKTLVGTLPVYLNALSGKGVHVVTVNDYLARRDANWMRPLYEFLGLSVGVVTPFQPPEDKRAAYAADITYGTNNEFGFDYLRDNMAFSLDDKFQRELNFAVVDEVDSILIDEARTPLIISGQAEDSSELYIKINKLIPRLKRQVEEVEGKPTEEGHYSIDEKTRQVELNEQGHQFIEDLLSQNGLLGEGESLYSAHNLSLLTHVYAALRAHTLFHRNVEYIVQGDQILLIDEHTGRTMPGRRLSEGLHQAIEAKEGLPIQAESQTLASTTFQNYFRLYNKLAGMTGTADTEAFEFRQIYGLDVVVIPTHRPIARKDFNDLVYLTQEEKYAAIITDIKQCQALGRPILVGTASIESSEYVSKLLQEAGIEHKVLNAKYHEKEAEIIAQAGAPGSVTIATNMAGRGTDILLGGNWEVEVAALENPTEEQIAQIKAEWQKRHQQVIEAGGLHVIASERHESRRIDNQLRGRAGRQGDPGSSRFYLSLEDNLMRIFASDRVKNFMKALGMQSGEAIEHRMVTNAIEKAQRKVEGRNFDIRKQLLEFDDVANEQRKVIYHMRNTLLSAEDVGETIKEFREETLSATINQHIPPQSLPEQWDIEGLEAALYSDFAVRLPIQQWLDEDDKLYEETLRSKILEQIVAAYYEKEELAGAEALRAFEKQMLLRVLDDLWKDHLSTMDHLRHGIHLRGYAQKNPKQEYKRESFTLFQELLDSIKRDTIRVLSHVQVRREDPAEEEARLRREAEELAKRMQFQHAEAPSMEQAVAGEEEELPEGPAPVVPLEPVRNEQKIGRNEPCPCGSGKKYKHCHGQLD.

ATP contacts are provided by residues glutamine 87, 105–109 (GEGKT), and aspartate 512. The disordered stretch occupies residues 857 to 916 (QHAEAPSMEQAVAGEEEELPEGPAPVVPLEPVRNEQKIGRNEPCPCGSGKKYKHCHGQLD). Zn(2+) contacts are provided by cysteine 900, cysteine 902, cysteine 911, and histidine 912. Basic residues predominate over residues 906–916 (KKYKHCHGQLD).

This sequence belongs to the SecA family. As to quaternary structure, monomer and homodimer. Part of the essential Sec protein translocation apparatus which comprises SecA, SecYEG and auxiliary proteins SecDF-YajC and YidC. The cofactor is Zn(2+).

The protein resides in the cell inner membrane. It is found in the cytoplasm. The catalysed reaction is ATP + H2O + cellular proteinSide 1 = ADP + phosphate + cellular proteinSide 2.. In terms of biological role, part of the Sec protein translocase complex. Interacts with the SecYEG preprotein conducting channel. Has a central role in coupling the hydrolysis of ATP to the transfer of proteins into and across the cell membrane, serving both as a receptor for the preprotein-SecB complex and as an ATP-driven molecular motor driving the stepwise translocation of polypeptide chains across the membrane. The sequence is that of Protein translocase subunit SecA from Pseudomonas aeruginosa (strain LESB58).